The sequence spans 282 residues: Heat stress transcription factor A-7b (282 aa).

2 stretches are compositionally biased toward low complexity: residues 1-11 and 120-134; these read MDPSSSSRARS and SSSSPPSLNYSQSQP. 2 disordered regions span residues 1–24 and 117–139; these read MDPSSSSRARSMPPPVPMEGLQEA and RRTSSSSPPSLNYSQSQPEAHDP. A DNA-binding region spans residues 26-120; that stretch reads PSPFLTKTFE…LLKSIKRRTS (95 aa). Residues 137 to 196 are hydrophobic repeat HR-A/B; it reads HDPGVELPQLREERHVLMMEISTLRQEEQRARGYVQAMEQRINGAEKKQRHMMSFLRRAV. The Nuclear localization signal signature appears at 208 to 212; it reads QKRDR. Positions 232–240 match the Nuclear export signal motif; the sequence is LSELEALAL. Residues 259–268 carry the AHA motif; the sequence is DGFWEELLMN.

The protein belongs to the HSF family. Class A subfamily. As to quaternary structure, homotrimer. In terms of processing, exhibits temperature-dependent phosphorylation.

Its subcellular location is the cytoplasm. It localises to the nucleus. In terms of biological role, transcriptional activator that specifically binds DNA sequence 5'-AGAAnnTTCT-3' known as heat shock promoter elements (HSE). The sequence is that of Heat stress transcription factor A-7b (HSFA7B) from Arabidopsis thaliana (Mouse-ear cress).